We begin with the raw amino-acid sequence, 136 residues long: Large-conductance mechanosensitive channel (136 aa).

2 consecutive transmembrane segments (helical) span residues 9–29 and 79–99; these read AFAS…GAAF and IQTI…VKAI.

The protein belongs to the MscL family. As to quaternary structure, homopentamer.

The protein localises to the cell inner membrane. Functionally, channel that opens in response to stretch forces in the membrane lipid bilayer. May participate in the regulation of osmotic pressure changes within the cell. This chain is Large-conductance mechanosensitive channel, found in Shewanella baltica (strain OS223).